Here is a 604-residue protein sequence, read N- to C-terminus: Arginine--tRNA ligase (604 aa).

A 'HIGH' region motif is present at residues 142–152; that stretch reads PNIAKEMHVGH.

This sequence belongs to the class-I aminoacyl-tRNA synthetase family. In terms of assembly, monomer.

It is found in the cytoplasm. It carries out the reaction tRNA(Arg) + L-arginine + ATP = L-arginyl-tRNA(Arg) + AMP + diphosphate. This Prochlorococcus marinus (strain MIT 9312) protein is Arginine--tRNA ligase.